Reading from the N-terminus, the 769-residue chain is Metal transporter CNNM4 (769 aa).

At 1–175 (MAASAGCYYG…RLRVLEEEKP (175 aa)) the chain is on the extracellular side. N-linked (GlcNAc...) asparagine glycosylation is found at Asn-99 and Asn-115. The CNNM transmembrane domain occupies 175-355 (PLLPIWLQAC…EPYSGIVREE (181 aa)). A helical membrane pass occupies residues 176–196 (LLPIWLQACIIAVLLTLSGIF). The Cytoplasmic segment spans residues 197 to 237 (SGLNLGLMALDPMELRVVQRCGTEKEKRYASKIEPVRRKGN). Positions 238–258 (YLLCSLLLGNVLVNTTLTALL) form an intramembrane region, helical. The Cytoplasmic portion of the chain corresponds to 259-261 (DEL). The chain crosses the membrane as a helical span at residues 262–282 (IGSGLAAVLASTTGIVVLGEI). Residues 283–292 (VPQALCSRHG) are Extracellular-facing. The helical transmembrane segment at 293-313 (LAVGANTLWLTRIFMLLTFPV) threads the bilayer. The Cytoplasmic segment spans residues 314-769 (AYPVSRLLDC…SQHSLQHNAV (456 aa)). 2 consecutive CBS domains span residues 374 to 435 (MTKV…CTPL) and 442 to 508 (YSHP…ILDE). The tract at residues 717 to 769 (LMSSRLDSSPQSPEGGTRKPDSTLSERSEVLEDETTSLLNQRNSQHSLQHNAV) is disordered. Residues 721–730 (RLDSSPQSPE) are compositionally biased toward polar residues. The span at 732-746 (GTRKPDSTLSERSEV) shows a compositional bias: basic and acidic residues. A compositionally biased stretch (polar residues) spans 752–769 (TSLLNQRNSQHSLQHNAV).

The protein belongs to the ACDP family.

It localises to the cell membrane. In terms of biological role, probable metal transporter. In Xenopus tropicalis (Western clawed frog), this protein is Metal transporter CNNM4 (cnnm4).